Reading from the N-terminus, the 88-residue chain is Homeobox protein knotted-1-like 11 (88 aa).

Residues 4–24 (ELKEMLLKKYSGCLSRLRSEF) enclose the ELK domain. The homeobox; TALE-type DNA-binding region spans 25-88 (LKKRKKGKLP…NQRKRHWKPS (64 aa)).

It belongs to the TALE/KNOX homeobox family.

It is found in the nucleus. In terms of biological role, probably binds to the DNA sequence 5'-TGAC-3'. The protein is Homeobox protein knotted-1-like 11 (KNOX11) of Zea mays (Maize).